The chain runs to 428 residues: 3-phosphoshikimate 1-carboxyvinyltransferase (428 aa).

Positions 22, 23, and 27 each coordinate 3-phosphoshikimate. K22 lines the phosphoenolpyruvate pocket. Positions 94 and 122 each coordinate phosphoenolpyruvate. 6 residues coordinate 3-phosphoshikimate: S169, S170, Q171, S197, D315, and K342. A phosphoenolpyruvate-binding site is contributed by Q171. D315 acts as the Proton acceptor in catalysis. Phosphoenolpyruvate is bound by residues R346, R389, and K414.

Belongs to the EPSP synthase family. As to quaternary structure, monomer.

The protein localises to the cytoplasm. It carries out the reaction 3-phosphoshikimate + phosphoenolpyruvate = 5-O-(1-carboxyvinyl)-3-phosphoshikimate + phosphate. It participates in metabolic intermediate biosynthesis; chorismate biosynthesis; chorismate from D-erythrose 4-phosphate and phosphoenolpyruvate: step 6/7. In terms of biological role, catalyzes the transfer of the enolpyruvyl moiety of phosphoenolpyruvate (PEP) to the 5-hydroxyl of shikimate-3-phosphate (S3P) to produce enolpyruvyl shikimate-3-phosphate and inorganic phosphate. The chain is 3-phosphoshikimate 1-carboxyvinyltransferase from Cellvibrio japonicus (strain Ueda107) (Pseudomonas fluorescens subsp. cellulosa).